Consider the following 122-residue polypeptide: Large ribosomal subunit protein uL14 (122 aa).

This sequence belongs to the universal ribosomal protein uL14 family. Part of the 50S ribosomal subunit. Forms a cluster with proteins L3 and L19. In the 70S ribosome, L14 and L19 interact and together make contacts with the 16S rRNA in bridges B5 and B8.

Its function is as follows. Binds to 23S rRNA. Forms part of two intersubunit bridges in the 70S ribosome. This is Large ribosomal subunit protein uL14 from Halorhodospira halophila (strain DSM 244 / SL1) (Ectothiorhodospira halophila (strain DSM 244 / SL1)).